The primary structure comprises 783 residues: ATP-dependent zinc metalloprotease FtsH (783 aa).

Low complexity predominate over residues 1 to 16 (MSETPNTNEQNNPNNQ). Positions 1–79 (MSETPNTNEQ…DKEEDFASRL (79 aa)) are disordered. Over 1–86 (MSETPNTNEQ…SRLNTRPPQR (86 aa)) the chain is Cytoplasmic. A compositionally biased stretch (basic and acidic residues) spans 35–61 (MPERPERHNQADGAPKRPGDDDRKSER). The chain crosses the membrane as a helical span at residues 87-107 (ASIITIIIIFLVAFFIGSQMM). Topologically, residues 108–233 (NMVHGEETDD…EYQVTLPSNV (126 aa)) are extracellular. The helical transmembrane segment at 234–254 (TEILISVLPMLLFAGLLIYFF) threads the bilayer. Topologically, residues 255-783 (SQMSKANNSQ…APQPPAAPQQ (529 aa)) are cytoplasmic. 325–332 (GPPGTGKT) lines the ATP pocket. Residue H547 coordinates Zn(2+). E548 is an active-site residue. Zn(2+) is bound by residues H551 and D623. The span at 738–771 (EAAAKAADQAEQPQVEAEPVAQVATPAAPVAPAV) shows a compositional bias: low complexity. Positions 738–783 (EAAAKAADQAEQPQVEAEPVAQVATPAAPVAPAVPEAPQPPAAPQQ) are disordered. Residues 772–783 (PEAPQPPAAPQQ) show a composition bias toward pro residues.

It in the central section; belongs to the AAA ATPase family. This sequence in the C-terminal section; belongs to the peptidase M41 family. Homohexamer. The cofactor is Zn(2+).

The protein resides in the cell membrane. Functionally, acts as a processive, ATP-dependent zinc metallopeptidase for both cytoplasmic and membrane proteins. Plays a role in the quality control of integral membrane proteins. The chain is ATP-dependent zinc metalloprotease FtsH from Slackia heliotrinireducens (strain ATCC 29202 / DSM 20476 / NCTC 11029 / RHS 1) (Peptococcus heliotrinreducens).